Consider the following 277-residue polypeptide: Indole-3-glycerol phosphate synthase (277 aa).

This sequence belongs to the TrpC family.

The catalysed reaction is 1-(2-carboxyphenylamino)-1-deoxy-D-ribulose 5-phosphate + H(+) = (1S,2R)-1-C-(indol-3-yl)glycerol 3-phosphate + CO2 + H2O. It participates in amino-acid biosynthesis; L-tryptophan biosynthesis; L-tryptophan from chorismate: step 4/5. The sequence is that of Indole-3-glycerol phosphate synthase from Pseudomonas putida (strain ATCC 700007 / DSM 6899 / JCM 31910 / BCRC 17059 / LMG 24140 / F1).